The sequence spans 27 residues: Metallothionein-like protein CAP5 (27 aa).

Residues 1-18 (MAPCSCKSCGTSCAGSCT) are compositionally biased toward low complexity. The tract at residues 1–27 (MAPCSCKSCGTSCAGSCTSCSCGSCSH) is disordered. Positions 4, 6, 9, 13, 20, 22, and 25 each coordinate Cu(+).

The protein belongs to the metallothionein superfamily. Type 8 family.

The protein is Metallothionein-like protein CAP5 (CAP5) of Colletotrichum gloeosporioides (Anthracnose fungus).